We begin with the raw amino-acid sequence, 174 residues long: Single-stranded DNA-binding protein 1 (174 aa).

Residues 6–111 (VNKVILVGNL…VVVNVGGTMQ (106 aa)) enclose the SSB domain. The DNA-binding element occupies 55–61 (WHRVVLF). A disordered region spans residues 110–174 (MQMLGGRQGG…PMDFDDDIPF (65 aa)). The span at 115–133 (GRQGGGAPAGGGQQQGGWG) shows a compositional bias: gly residues. Over residues 134–160 (QPQQPQGGNQFSGGAQSRPQQQAPAAP) the composition is skewed to low complexity. The Important for interaction with partner proteins signature appears at 169 to 174 (DDDIPF).

As to quaternary structure, homotetramer. Binds PriA via its C-terminus.

Plays an important role in DNA replication, recombination and repair. Binds to ssDNA and to an array of partner proteins to recruit them to their sites of action during DNA metabolism. Stimulates the ATPase activity of PriA. One tetramer binds to 26 nucleotides (nt) of ssDNA, a 55 nt piece of ssDNA probably binds 2 tetramers. The sequence is that of Single-stranded DNA-binding protein 1 from Klebsiella pneumoniae subsp. pneumoniae (strain ATCC 700721 / MGH 78578).